The sequence spans 85 residues: Hepcidin (85 aa).

A signal peptide spans 1–24; the sequence is MKTFSVAVAVAVVLAFICLQESSA. The propeptide occupies 25–64; the sequence is VPANEEQELEQQIYFADPEMPVESCKMPYYMRENRQGSPA. 4 disulfides stabilise this stretch: C66/C83, C69/C72, C70/C79, and C73/C82.

Monomer. As to expression, expressed in all tissues tested, with highest levels of expression in kidney and lowest levels in liver. Intra-peritoneal injection of lipopolysaccharide results in increased expression in heart, spleen and stomach, but not in kidney or liver.

The protein resides in the secreted. Seems to act as a signaling molecule involved in the maintenance of iron homeostasis. Seems to be required in conjunction with HFE to regulate both intestinal iron absorption and iron storage in macrophages. Its function is as follows. Has very strong antibacterial activity against the marine Gram-negative bacteria V.alginolyticus (MIC=24 uM), V.fluvialis, V.harveyis (MIC=12 uM) and V.parahaemolyticus (MIC=6 uM). Has antibacterial activity against the Gram-negative bacteria A.hydrophila (MIC=6 uM), E.coli (MIC=24 uM), and E.coli BL21(DE3)plysS (MIC=6 uM), and the Gram-positive bacteria B.cereus (MIC=24 uM), B.subtilis (MIC=6 uM), C.glutamicum (MIC=3 uM), M.luteus (MIC=3 uM), M.lysodeikticus, S.aureus (MIC=6 uM) and S.epidermis (MIC=12 uM). Possesses antifungal activity against A.niger (MIC=24 uM), F.graminearum (MIC24 uM) and F.solani (MIC=24 uM), but lacks antifungal activity against the yeasts P.pastoris GS115 and C.albicans. The sequence is that of Hepcidin from Larimichthys crocea (Large yellow croaker).